Here is a 104-residue protein sequence, read N- to C-terminus: Large ribosomal subunit protein uL24 (104 aa).

This sequence belongs to the universal ribosomal protein uL24 family. Part of the 50S ribosomal subunit.

Its function is as follows. One of two assembly initiator proteins, it binds directly to the 5'-end of the 23S rRNA, where it nucleates assembly of the 50S subunit. One of the proteins that surrounds the polypeptide exit tunnel on the outside of the subunit. The polypeptide is Large ribosomal subunit protein uL24 (Bradyrhizobium sp. (strain BTAi1 / ATCC BAA-1182)).